Reading from the N-terminus, the 227-residue chain is DNA repair protein RecO (227 aa).

The protein belongs to the RecO family.

Functionally, involved in DNA repair and RecF pathway recombination. The protein is DNA repair protein RecO of Pseudomonas putida (strain ATCC 47054 / DSM 6125 / CFBP 8728 / NCIMB 11950 / KT2440).